A 266-amino-acid chain; its full sequence is Putative hydro-lyase Jann_2570 (266 aa).

The protein belongs to the D-glutamate cyclase family.

The protein is Putative hydro-lyase Jann_2570 of Jannaschia sp. (strain CCS1).